Here is a 483-residue protein sequence, read N- to C-terminus: Glutamate--tRNA ligase (483 aa).

The short motif at 9–19 (PSPTGNLHIGT) is the 'HIGH' region element. The 'KMSKS' region motif lies at 250-254 (KLSKR). Residue Lys253 coordinates ATP.

It belongs to the class-I aminoacyl-tRNA synthetase family. Glutamate--tRNA ligase type 1 subfamily. In terms of assembly, monomer.

The protein resides in the cytoplasm. It catalyses the reaction tRNA(Glu) + L-glutamate + ATP = L-glutamyl-tRNA(Glu) + AMP + diphosphate. Its function is as follows. Catalyzes the attachment of glutamate to tRNA(Glu) in a two-step reaction: glutamate is first activated by ATP to form Glu-AMP and then transferred to the acceptor end of tRNA(Glu). This is Glutamate--tRNA ligase from Synechocystis sp. (strain ATCC 27184 / PCC 6803 / Kazusa).